A 275-amino-acid polypeptide reads, in one-letter code: tRNA (guanine-N(1)-)-methyltransferase (275 aa).

S-adenosyl-L-methionine-binding positions include Gly-139 and 159-164; that span reads IGDYIL.

Belongs to the RNA methyltransferase TrmD family. In terms of assembly, homodimer.

The protein resides in the cytoplasm. The enzyme catalyses guanosine(37) in tRNA + S-adenosyl-L-methionine = N(1)-methylguanosine(37) in tRNA + S-adenosyl-L-homocysteine + H(+). In terms of biological role, specifically methylates guanosine-37 in various tRNAs. The sequence is that of tRNA (guanine-N(1)-)-methyltransferase from Lachnoclostridium phytofermentans (strain ATCC 700394 / DSM 18823 / ISDg) (Clostridium phytofermentans).